Reading from the N-terminus, the 591-residue chain is L-fucose isomerase (591 aa).

Catalysis depends on proton acceptor residues E337 and D361. The Mn(2+) site is built by E337, D361, and H528.

It belongs to the L-fucose isomerase family. In terms of assembly, homohexamer. Requires Mn(2+) as cofactor.

Its subcellular location is the cytoplasm. It carries out the reaction L-fucose = L-fuculose. The protein operates within carbohydrate degradation; L-fucose degradation; L-lactaldehyde and glycerone phosphate from L-fucose: step 1/3. In terms of biological role, converts the aldose L-fucose into the corresponding ketose L-fuculose. The sequence is that of L-fucose isomerase from Escherichia coli (strain ATCC 8739 / DSM 1576 / NBRC 3972 / NCIMB 8545 / WDCM 00012 / Crooks).